Consider the following 377-residue polypeptide: S-adenosylmethionine synthase (377 aa).

His14 is a binding site for ATP. Asp16 is a binding site for Mg(2+). Glu42 contacts K(+). An L-methionine-binding site is contributed by Gln98. The tract at residues 98–108 (QSADIALGIDL) is flexible loop. ATP-binding positions include 162–164 (DMK), 228–229 (RF), Asp237, 243–244 (RK), Ala260, and Lys264. An L-methionine-binding site is contributed by Asp237. Position 268 (Lys268) interacts with L-methionine.

Belongs to the AdoMet synthase family. As to quaternary structure, homotetramer; dimer of dimers. The cofactor is Mg(2+). K(+) is required as a cofactor.

The protein localises to the cytoplasm. It catalyses the reaction L-methionine + ATP + H2O = S-adenosyl-L-methionine + phosphate + diphosphate. It functions in the pathway amino-acid biosynthesis; S-adenosyl-L-methionine biosynthesis; S-adenosyl-L-methionine from L-methionine: step 1/1. Catalyzes the formation of S-adenosylmethionine (AdoMet) from methionine and ATP. The overall synthetic reaction is composed of two sequential steps, AdoMet formation and the subsequent tripolyphosphate hydrolysis which occurs prior to release of AdoMet from the enzyme. The protein is S-adenosylmethionine synthase of Mesoplasma florum (strain ATCC 33453 / NBRC 100688 / NCTC 11704 / L1) (Acholeplasma florum).